The chain runs to 730 residues: Elongation factor 2 (730 aa).

The region spanning 19 to 229 (LMIRNIGIVA…GVSFSEVFNY (211 aa)) is the tr-type G domain. GTP is bound by residues 28-35 (AHIDHGKT), 94-98 (DTPGH), and 148-151 (NKVD). A Diphthamide modification is found at His-596.

Belongs to the TRAFAC class translation factor GTPase superfamily. Classic translation factor GTPase family. EF-G/EF-2 subfamily.

The protein localises to the cytoplasm. Its function is as follows. Catalyzes the GTP-dependent ribosomal translocation step during translation elongation. During this step, the ribosome changes from the pre-translocational (PRE) to the post-translocational (POST) state as the newly formed A-site-bound peptidyl-tRNA and P-site-bound deacylated tRNA move to the P and E sites, respectively. Catalyzes the coordinated movement of the two tRNA molecules, the mRNA and conformational changes in the ribosome. The polypeptide is Elongation factor 2 (fusA) (Methanococcoides burtonii (strain DSM 6242 / NBRC 107633 / OCM 468 / ACE-M)).